The sequence spans 3914 residues: Trichosetin synthetase PKS-NRPS1 (3914 aa).

Residues 4–420 (NEPIAIIGSA…GTNAHAIIEA (417 aa)) form the Ketosynthase family 3 (KS3) domain. Catalysis depends on for beta-ketoacyl synthase activity residues C177, H301, and H340. The interval 525 to 847 (VLTGQGAQWP…REKDDIQQFA (323 aa)) is malonyl-CoA:ACP transacylase (MAT) domain. The N-terminal hotdog fold stretch occupies residues 913–1047 (HPILGRRCHD…AHVKASLSVP (135 aa)). Residues 913 to 1214 (HPILGRRCHD…MELVPFSPAT (302 aa)) form a dehydratase (DH) domain region. The 304-residue stretch at 913–1216 (HPILGRRCHD…LVPFSPATPE (304 aa)) folds into the PKS/mFAS DH domain. H946 functions as the Proton acceptor; for dehydratase activity in the catalytic mechanism. Residues 1062 to 1216 (LRKVEVDRFY…LVPFSPATPE (155 aa)) are C-terminal hotdog fold. The active-site Proton donor; for dehydratase activity is the D1122. The methyltransferase (MT) domain stretch occupies residues 1364-1593 (EGFGLDLVNK…DLPETKSTEL (230 aa)). Positions 2083–2255 (TFLLIGLSGE…VAASSIDISS (173 aa)) are ketoreductase (KR) domain. The region spanning 2356–2436 (LADVKTKADA…DLIEESLNLI (81 aa)) is the Carrier 1 domain. Position 2396 is an O-(pantetheine 4'-phosphoryl)serine (S2396). The tract at residues 2447–2518 (EAGSTPTTQP…DSTDNSTPLK (72 aa)) is disordered. Polar residues predominate over residues 2481 to 2500 (QQTGSDSSRSPIDTPLTSME). The interval 2529-2956 (SYGQAGFWFL…VQGTNKAADT (428 aa)) is condensation (C) domain. The adenylation (A) (KR) domain stretch occupies residues 2991 to 3388 (QTIQANSTKV…LLFCDGRLED (398 aa)). In terms of domain architecture, Carrier 2 spans 3502–3579 (GTLTVAEQRL…TMAVVLESCG (78 aa)). An O-(pantetheine 4'-phosphoryl)serine modification is found at S3539. The reductase (RED) domain stretch occupies residues 3615–3831 (LTGSAGYLGR…VLPTGDIVKA (217 aa)).

It in the C-terminal section; belongs to the NRP synthetase family.

It catalyses the reaction L-serine + 7 malonyl-CoA + acetyl-CoA + 2 S-adenosyl-L-methionine + ATP + 8 NADPH + 11 H(+) = (5S)-3-[(2E,6R,8E,10E,12E)-2,6-dimethyltetradeca-2,8,10,12-tetraenoyl]-5-(hydroxymethyl)pyrrolidine-2,4-dione + AMP + 2 S-adenosyl-L-homocysteine + 7 CO2 + diphosphate + 8 NADP(+) + 8 CoA + 6 H2O. Its pathway is mycotoxin biosynthesis. Its function is as follows. Hybrid PKS-NRPS synthetase; part of the gene cluster that mediates the biosynthesis of trichosetin, a trans-fused decalin-containing tetramic acid with antimicrobial activity. The PKS module of PKS-NRPS1 together with the enoylreductase (ER) catalyze the formation of the polyketide unit which is then conjugated to L-serine by the condensation domain of the PKS-NRPS1 NRPS module. Activity of the Dieckmann cyclase domain (RED) results in release of the Dieckmann product intermediate. Diels-Alderase (DA) is involved in endo-selective Diels-Alder cycloaddition to form the decalin ring, leading to the production of N-desmethylequisetin also called trichosetin. The cluster does not contain the equisetin N-methyltransferase and consequently, trichosetin is isolated as final product. This chain is Trichosetin synthetase PKS-NRPS1, found in Gibberella fujikuroi (strain CBS 195.34 / IMI 58289 / NRRL A-6831) (Bakanae and foot rot disease fungus).